The primary structure comprises 200 residues: ATP-dependent Clp protease proteolytic subunit (200 aa).

Ser-103 serves as the catalytic Nucleophile. His-128 is a catalytic residue.

Belongs to the peptidase S14 family. As to quaternary structure, fourteen ClpP subunits assemble into 2 heptameric rings which stack back to back to give a disk-like structure with a central cavity, resembling the structure of eukaryotic proteasomes.

It is found in the cytoplasm. The catalysed reaction is Hydrolysis of proteins to small peptides in the presence of ATP and magnesium. alpha-casein is the usual test substrate. In the absence of ATP, only oligopeptides shorter than five residues are hydrolyzed (such as succinyl-Leu-Tyr-|-NHMec, and Leu-Tyr-Leu-|-Tyr-Trp, in which cleavage of the -Tyr-|-Leu- and -Tyr-|-Trp bonds also occurs).. Functionally, cleaves peptides in various proteins in a process that requires ATP hydrolysis. Has a chymotrypsin-like activity. Plays a major role in the degradation of misfolded proteins. This Vibrio cholerae serotype O1 (strain ATCC 39541 / Classical Ogawa 395 / O395) protein is ATP-dependent Clp protease proteolytic subunit.